We begin with the raw amino-acid sequence, 259 residues long: Pimeloyl-[acyl-carrier protein] methyl ester esterase (259 aa).

Substrate-binding positions include Trp18, 78–79 (SL), and 139–143 (FLALD). Ser78 acts as the Nucleophile in catalysis. Residues Asp203 and His231 contribute to the active site. His231 is a substrate binding site.

The protein belongs to the AB hydrolase superfamily. Carboxylesterase BioH family. In terms of assembly, monomer.

It localises to the cytoplasm. The enzyme catalyses 6-carboxyhexanoyl-[ACP] methyl ester + H2O = 6-carboxyhexanoyl-[ACP] + methanol + H(+). It functions in the pathway cofactor biosynthesis; biotin biosynthesis. Its function is as follows. The physiological role of BioH is to remove the methyl group introduced by BioC when the pimeloyl moiety is complete. It allows to synthesize pimeloyl-ACP via the fatty acid synthetic pathway through the hydrolysis of the ester bonds of pimeloyl-ACP esters. The protein is Pimeloyl-[acyl-carrier protein] methyl ester esterase of Stenotrophomonas maltophilia (strain K279a).